The chain runs to 863 residues: NACHT, LRR and PYD domains-containing protein 4B (863 aa).

Residues 1-93 form the Pyrin domain; that stretch reads MASLFSDFGF…TNRATGEIAA (93 aa). One can recognise an NACHT domain in the interval 143–466; it reads KMVVLQGVAG…FYLLHSEMDH (324 aa). Residue 149 to 156 coordinates ATP; the sequence is GVAGIGKT. 7 LRR repeats span residues 618-643, 683-706, 717-740, 741-763, 765-782, 797-824, and 843-863; these read WHQICSVFLRNKDIKTLRIEDTIFNE, SYNLEELYLRGTFLSHSDVEMLCD, ILDLANCSLCEHSWDYLSDVLRQN, KSLRYLNISYNNLKDEGLKALCR, LTLPNSALHSLSLEACQL, YKCLRRINLAKNSLGFSGLFVLCKAMKD, and SQEFLLSEMERNKILSIENGV.

Belongs to the NLRP family.

Functionally, may be involved in inflammation and recognition of cytosolic pathogen-associated molecular patterns (PAMPs) not intercepted by membrane-bound receptors. In Mus musculus (Mouse), this protein is NACHT, LRR and PYD domains-containing protein 4B (Nlrp4b).